We begin with the raw amino-acid sequence, 505 residues long: Glutamyl-tRNA(Gln) amidotransferase subunit A, mitochondrial (505 aa).

Residues Lys-76 and Ser-158 each act as charge relay system in the active site. Ser-182 (acyl-ester intermediate) is an active-site residue.

It belongs to the amidase family. GatA subfamily. In terms of assembly, subunit of the heterotrimeric GatCAB amidotransferase (AdT) complex, composed of A, B and C subunits.

It is found in the mitochondrion. The catalysed reaction is L-glutamyl-tRNA(Gln) + L-glutamine + ATP + H2O = L-glutaminyl-tRNA(Gln) + L-glutamate + ADP + phosphate + H(+). Allows the formation of correctly charged Gln-tRNA(Gln) through the transamidation of misacylated Glu-tRNA(Gln) in the mitochondria. The reaction takes place in the presence of glutamine and ATP through an activated gamma-phospho-Glu-tRNA(Gln). This Ixodes scapularis (Black-legged tick) protein is Glutamyl-tRNA(Gln) amidotransferase subunit A, mitochondrial.